The chain runs to 147 residues: Peptide methionine sulfoxide reductase MsrB (147 aa).

Residues 25–147 enclose the MsrB domain; sequence DEYWREHLTE…NSVSLIFNKK (123 aa). Positions 64, 67, 113, and 116 each coordinate Zn(2+). The active-site Nucleophile is Cys-136.

Belongs to the MsrB Met sulfoxide reductase family. Zn(2+) is required as a cofactor.

It carries out the reaction L-methionyl-[protein] + [thioredoxin]-disulfide + H2O = L-methionyl-(R)-S-oxide-[protein] + [thioredoxin]-dithiol. This is Peptide methionine sulfoxide reductase MsrB from Vibrio cholerae serotype O1 (strain ATCC 39541 / Classical Ogawa 395 / O395).